Here is a 171-residue protein sequence, read N- to C-terminus: S-ribosylhomocysteine lyase (171 aa).

The Fe cation site is built by H54, H58, and C128.

This sequence belongs to the LuxS family. As to quaternary structure, homodimer. It depends on Fe cation as a cofactor.

The enzyme catalyses S-(5-deoxy-D-ribos-5-yl)-L-homocysteine = (S)-4,5-dihydroxypentane-2,3-dione + L-homocysteine. Involved in the synthesis of autoinducer 2 (AI-2) which is secreted by bacteria and is used to communicate both the cell density and the metabolic potential of the environment. The regulation of gene expression in response to changes in cell density is called quorum sensing. Catalyzes the transformation of S-ribosylhomocysteine (RHC) to homocysteine (HC) and 4,5-dihydroxy-2,3-pentadione (DPD). In Escherichia coli (strain 55989 / EAEC), this protein is S-ribosylhomocysteine lyase.